A 62-amino-acid polypeptide reads, in one-letter code: UPF0291 protein CLB_2550 (62 aa).

This sequence belongs to the UPF0291 family.

The protein localises to the cytoplasm. The protein is UPF0291 protein CLB_2550 of Clostridium botulinum (strain ATCC 19397 / Type A).